Here is a 418-residue protein sequence, read N- to C-terminus: Putative ion-transport protein YfeO (418 aa).

12 helical membrane-spanning segments follow: residues 10-30 (LLLS…LIVV), 54-74 (DSPI…GLVI), 99-119 (ALPG…SLGP), 120-140 (EHPI…RLLP), 149-169 (ILAS…AALI), 186-206 (LFAP…FFHP), 223-243 (ILSG…AVWC), 258-278 (VLVL…GGPV), 300-320 (DYFL…ASGF), 322-342 (GGRI…LHEH), 343-363 (VPAV…VLVV), and 371-391 (LFMA…CIVM).

This sequence belongs to the chloride channel (TC 2.A.49) family.

It localises to the cell membrane. This chain is Putative ion-transport protein YfeO, found in Shigella sonnei (strain Ss046).